Consider the following 2792-residue polypeptide: E3 ubiquitin-protein ligase UBR5 (2792 aa).

N-acetylthreonine is present on threonine 2. A compositionally biased stretch (basic and acidic residues) spans aspartate 77–aspartate 88. A disordered region spans residues aspartate 77 to glutamine 175. Over residues serine 94–proline 111 the composition is skewed to low complexity. Serine 110 carries the phosphoserine modification. Residues glycine 135–serine 144 are compositionally biased toward gly residues. Residues valine 184–arginine 226 form the UBA domain. Serine 321 is modified (phosphoserine). The span at phenylalanine 322–asparagine 341 shows a compositional bias: basic and acidic residues. A disordered region spans residues phenylalanine 322–proline 347. 2 positions are modified to phosphoserine: serine 346 and serine 572. A compositionally biased stretch (basic and acidic residues) spans lysine 577–lysine 598. A disordered region spans residues lysine 577 to glutamate 642. Serine 606 bears the Phosphoserine mark. A compositionally biased stretch (low complexity) spans alanine 608–serine 622. Phosphothreonine is present on threonine 631. 3 positions are modified to phosphoserine: serine 802, serine 922, and serine 1012. 2 disordered regions span residues alanine 993–proline 1029 and threonine 1046–valine 1069. Positions valine 1011–methionine 1027 are enriched in pro residues. The span at threonine 1046 to proline 1067 shows a compositional bias: polar residues. Threonine 1109 and threonine 1129 each carry phosphothreonine. The UBR-type zinc finger occupies aspartate 1171–alanine 1239. Residues serine 1221, serine 1302, serine 1349, serine 1369, and serine 1475 each carry the phosphoserine modification. The segment at arginine 1293–aspartate 1312 is disordered. The segment at serine 1509–serine 1734 is disordered. A compositionally biased stretch (low complexity) spans serine 1518 to serine 1531. The segment covering tyrosine 1532–proline 1547 has biased composition (polar residues). Residue serine 1543 is modified to Phosphoserine. Acidic residues-rich tracts occupy residues glutamate 1553–valine 1568 and histidine 1599–leucine 1608. Residues asparagine 1623–glycine 1632 show a composition bias toward polar residues. Low complexity-rich tracts occupy residues serine 1635–valine 1651, serine 1662–serine 1675, and alanine 1720–serine 1734. A Phosphothreonine modification is found at threonine 1730. Serine 1735 is subject to Phosphoserine. Position 1740 is a phosphotyrosine (tyrosine 1740). Serine 1774 is subject to Phosphoserine. A disordered region spans residues leucine 1853–alanine 1884. Positions alanine 1873 to alanine 1884 are enriched in basic and acidic residues. At threonine 1963 the chain carries Phosphothreonine. The disordered stretch occupies residues glycine 1978–proline 2015. Over residues isoleucine 1979–threonine 1992 the composition is skewed to acidic residues. Residues serine 1984, serine 2020, and serine 2022 each carry the phosphoserine modification. Threonine 2024 carries the post-translational modification Phosphothreonine. At serine 2070 the chain carries Phosphoserine. The segment at arginine 2111–aspartate 2137 is disordered. Phosphothreonine is present on threonine 2207. Phosphoserine is present on residues serine 2235 and serine 2283. The tract at residues histidine 2317 to histidine 2387 is disordered. Composition is skewed to basic and acidic residues over residues asparagine 2326–arginine 2342 and serine 2350–leucine 2362. In terms of domain architecture, PABC spans proline 2371–arginine 2448. The 338-residue stretch at isoleucine 2455–valine 2792 folds into the HECT domain. Serine 2463, serine 2477, and serine 2479 each carry phosphoserine. The tract at residues valine 2467 to asparagine 2494 is disordered. Residues methionine 2483–aspartate 2493 show a composition bias toward acidic residues. Cysteine 2761 acts as the Glycyl thioester intermediate in catalysis.

It belongs to the UBR5 family. In terms of assembly, homotetramer; composed of a dimer of dimers. Associates with CDK9 and TFIIS/TCEA1 and forms a transcription regulatory complex made of CDK9, RNAP II, UBR5 and TFIIS/TCEA1 that can stimulate target gene transcription (e.g. gamma fibrinogen/FGG) by recruiting their promoters. Associates with the E3 ligase complex containing DYRK2, EDD/UBR5, DDB1 and DCAF1 proteins (EDVP complex). Binds TOPBP1. Interacts with PIH1D1. Interacts with CIB1.

It localises to the nucleus. The protein localises to the cytoplasm. The catalysed reaction is S-ubiquitinyl-[E2 ubiquitin-conjugating enzyme]-L-cysteine + [acceptor protein]-L-lysine = [E2 ubiquitin-conjugating enzyme]-L-cysteine + N(6)-ubiquitinyl-[acceptor protein]-L-lysine.. The protein operates within protein modification; protein ubiquitination. E3 ubiquitin-protein ligase involved in different protein quality control pathways in the cytoplasm and nucleus. Mainly acts as a ubiquitin chain elongator that extends pre-ubiquitinated substrates. Component of the N-end rule pathway: ubiquitinates proteins bearing specific N-terminal residues that are destabilizing according to the N-end rule, leading to their degradation. Recognizes type-1 N-degrons, containing positively charged amino acids (Arg, Lys and His). Together with UBR4, part of a cytoplasm protein quality control pathway that prevents protein aggregation by catalyzing assembly of heterotypic 'Lys-11'-/'Lys-48'-linked branched ubiquitin chains on aggregated proteins, leading to substrate recognition by the segregase p97/VCP and degradation by the proteasome: UBR5 is probably branching multiple 'Lys-48'-linked chains of substrates initially modified with mixed conjugates by UBR4. Together with ITCH, catalyzes 'Lys-48'-/'Lys-63'-branched ubiquitination of TXNIP, leading to its degradation: UBR5 mediates branching of 'Lys-48'-linked chains of substrates initially modified with 'Lys-63'-linked conjugates by ITCH. Catalytic component of a nuclear protein quality control pathway that mediates ubiquitination and degradation of unpaired transcription factors (i.e. transcription factors that are not assembled into functional multiprotein complexes): specifically recognizes and binds degrons that are not accessible when transcription regulators are associated with their coactivators. Ubiquitinates various unpaired transcription regulator (MYC, SUPT4H1, SUPT5H, CDC20 and MCRS1), as well as ligand-bound nuclear receptors (ESR1, NR1H3, NR3C1, PGR, RARA, RXRA AND VDR) that are not associated with their nuclear receptor coactivators (NCOAs). Involved in maturation and/or transcriptional regulation of mRNA by mediating polyubiquitination and activation of CDK9. Also acts as a regulator of DNA damage response by acting as a suppressor of RNF168, an E3 ubiquitin-protein ligase that promotes accumulation of 'Lys-63'-linked histone H2A and H2AX at DNA damage sites, thereby acting as a guard against excessive spreading of ubiquitinated chromatin at damaged chromosomes. Regulates DNA topoisomerase II binding protein (TopBP1) in the DNA damage response. Ubiquitinates acetylated PCK1. Acts as a positive regulator of the canonical Wnt signaling pathway by mediating (1) ubiquitination and stabilization of CTNNB1, and (2) 'Lys-48'-linked ubiquitination and degradation of TLE3. Promotes disassembly of the mitotic checkpoint complex (MCC) from the APC/C complex by catalyzing ubiquitination of BUB1B, BUB3 and CDC20. Plays an essential role in extraembryonic development. Required for the maintenance of skeletal tissue homeostasis by acting as an inhibitor of hedgehog (HH) signaling. This chain is E3 ubiquitin-protein ligase UBR5, found in Mus musculus (Mouse).